We begin with the raw amino-acid sequence, 185 residues long: Ribosome-recycling factor (185 aa).

Residues 142-164 show a composition bias toward basic and acidic residues; sequence IKKDGDAGEDDVTRAEKDLDKST. Residues 142 to 173 form a disordered region; the sequence is IKKDGDAGEDDVTRAEKDLDKSTHQYTSQVDD.

This sequence belongs to the RRF family.

The protein localises to the cytoplasm. Responsible for the release of ribosomes from messenger RNA at the termination of protein biosynthesis. May increase the efficiency of translation by recycling ribosomes from one round of translation to another. This Mycolicibacterium gilvum (strain PYR-GCK) (Mycobacterium gilvum (strain PYR-GCK)) protein is Ribosome-recycling factor.